A 1598-amino-acid chain; its full sequence is MGVPTKISILGRESIVADFGIWRNYVAKDLLSNCASSTYILISDTNLTPLYLAGFQQSFENAAAGLSPKPRLLTYEIPPGESSKSRETKAEIEDWMLARQPPCGRDTVIIALGGGVIGDLIGFVAATYMRGVRFVQVPTTLLAMVDSSIGGKTAIDTPNGKNLIGAIWQPQRIYLDMEFLNTLPEREFINGMAEVIKTAAISSEEKFAALENDADVILAAVKSKNTPDRLRFSSIQETLKRTILSSAEFKAQVVSADEREGGLRNLLNFGHSIGHAIEAILAPQVLHGECVSIGMVKEAELARHLGILNNVSVARIAKCLASYELPTSLKDERIKRLTAGKHCSVEQIITYMGVDKKNDGPKKKVVLLSAIGRTYEPRASTVSNEDLQVVLAPSIEVYPGFPKSLNVTCTPPGSKSISNRALVLAALGSGTCRIKNLLHSDDTEVMLTALERLGAATFSWESQGEVLVVNGNGGRMVASPKELYLGNAGTASRFLTTVATLAQKGSVASSVLTGNARMKQRPIGDLVDALKANGADIEYLENPKSLPLKITASGGFAGGEMRLDAKVSSQYVSSLLMCAPYAKEPVTLRLVGGKPVSQLYVDMTTAMMRSFGIDVKKSETEEHTYHIPRGVYKNPAEYVVESDASSATYPLAIAAMTGTSCTIPNIGSKSLQGDARFAIEVLRPMGCTVNQTDFSTSVTGTAGGKLKSLPTIDMEPMTDAFLTASVLAAVARGQGSNHTTRICGIANQRVKECNRIKAMKDELAKFGVTCREHDDGLEIDGIDRSTLRHPTEGVFCYDDHRVAMSFSVLALVAPQPTLILEKECVGKTWPGWWNTLAQTFKVKLDGKEVEVEERAETNGVAHLDKSAASIFIIGMRGAGKTTSGVWVSKALQRPFIDLDDELEKSEGMTIPEMIKQRGWEGFRDSELALLRRVMTEKPMGYIFACGGGVVELPEARELLTQYHKTKGNVILAMRDIKEVMDFLKIDKTRPAYVEDMMSVWLRRKPWYQECSNIQYYSRITQPDGMAQVLHGFNRFLKVITGQLDSLAQMRRKENTFFVSLTFPDLTPASNILKEVTLGSDAVELRVDLLKDPQSDSEIPSVDYVAEQISVLRSRVSVPLVFTIRTKSQGGRFPDDAYDAALQLYRLAIRMGSEFVDLELSFPEQLLRTVTEMKGFSKIIASHHDPEGLLSWANGSWIQIYNKALQYGDVIKLVGVAKTLDDNASLKKFKTWAEAKHDVPLIAINMGYKGQLSRILNGFMTPVSHPSLPFKAAPGQLSAREIRKGLSLMGEIKAKKFAVIGKPVSSSRSPAMHNALFKQMGLPHTYGRIETDNVEDVKEFILSPDFGGASVTIPLKLDIMPLLDEIAPEAEMIGAVNTIVSVPAAPGDKSQSSRLIGRNTDWQGMVRCLSDAGAYSAATPTTSSAGLIIGGGGTARAAIFALNSMSYSPIYIVGRSPEKLACMASSFPADYNIRIVDDVKALESLPMVAIGTIPGDKPIELHMREVLCEILSLCEKANVEAERKTGITPKRILLEMAYKPSVTSLMKLASDAGWTVLPGLEVLVAQGVYQSEYWTDITPVYENARKAVMGVSSSDDTIS.

A 3-dehydroquinate synthase region spans residues 1-384 (MGVPTKISIL…YEPRASTVSN (384 aa)). Residues 44–46 (DTN), 81–84 (ESSK), 114–116 (GGV), and aspartate 119 each bind NAD(+). Residue arginine 130 participates in 7-phospho-2-dehydro-3-deoxy-D-arabino-heptonate binding. 139-140 (TT) is an NAD(+) binding site. Residues aspartate 146 and lysine 152 each coordinate 7-phospho-2-dehydro-3-deoxy-D-arabino-heptonate. Lysine 161 is an NAD(+) binding site. Asparagine 162 contacts 7-phospho-2-dehydro-3-deoxy-D-arabino-heptonate. NAD(+) contacts are provided by residues 179–182 (FLNT) and asparagine 190. Glutamate 194 lines the Zn(2+) pocket. 7-phospho-2-dehydro-3-deoxy-D-arabino-heptonate-binding positions include 194–197 (EVIK) and lysine 250. Catalysis depends on glutamate 260, which acts as the Proton acceptor; for 3-dehydroquinate synthase activity. Residues 264–268 (RNLLN) and histidine 271 contribute to the 7-phospho-2-dehydro-3-deoxy-D-arabino-heptonate site. A Zn(2+)-binding site is contributed by histidine 271. Residue histidine 275 is the Proton acceptor; for 3-dehydroquinate synthase activity of the active site. Residues histidine 287 and lysine 356 each coordinate 7-phospho-2-dehydro-3-deoxy-D-arabino-heptonate. Histidine 287 lines the Zn(2+) pocket. An EPSP synthase region spans residues 397 to 842 (VYPGFPKSLN…WNTLAQTFKV (446 aa)). The active-site For EPSP synthase activity is cysteine 824. Residues 867–1059 (AASIFIIGMR…RRKENTFFVS (193 aa)) form a shikimate kinase region. ATP is bound at residue 874–881 (GMRGAGKT). Positions 1060 to 1280 (LTFPDLTPAS…AAPGQLSARE (221 aa)) are 3-dehydroquinase. Histidine 1183 functions as the Proton acceptor; for 3-dehydroquinate dehydratase activity in the catalytic mechanism. Lysine 1211 serves as the catalytic Schiff-base intermediate with substrate; for 3-dehydroquinate dehydratase activity. The shikimate dehydrogenase stretch occupies residues 1293-1598 (AKKFAVIGKP…GVSSSDDTIS (306 aa)).

In the N-terminal section; belongs to the sugar phosphate cyclases superfamily. Dehydroquinate synthase family. This sequence in the 2nd section; belongs to the EPSP synthase family. The protein in the 3rd section; belongs to the shikimate kinase family. It in the 4th section; belongs to the type-I 3-dehydroquinase family. In the C-terminal section; belongs to the shikimate dehydrogenase family. In terms of assembly, homodimer. Zn(2+) serves as cofactor.

It localises to the cytoplasm. It catalyses the reaction 7-phospho-2-dehydro-3-deoxy-D-arabino-heptonate = 3-dehydroquinate + phosphate. The catalysed reaction is 3-dehydroquinate = 3-dehydroshikimate + H2O. The enzyme catalyses shikimate + NADP(+) = 3-dehydroshikimate + NADPH + H(+). It carries out the reaction shikimate + ATP = 3-phosphoshikimate + ADP + H(+). It catalyses the reaction 3-phosphoshikimate + phosphoenolpyruvate = 5-O-(1-carboxyvinyl)-3-phosphoshikimate + phosphate. It participates in metabolic intermediate biosynthesis; chorismate biosynthesis; chorismate from D-erythrose 4-phosphate and phosphoenolpyruvate: step 2/7. It functions in the pathway metabolic intermediate biosynthesis; chorismate biosynthesis; chorismate from D-erythrose 4-phosphate and phosphoenolpyruvate: step 3/7. Its pathway is metabolic intermediate biosynthesis; chorismate biosynthesis; chorismate from D-erythrose 4-phosphate and phosphoenolpyruvate: step 4/7. The protein operates within metabolic intermediate biosynthesis; chorismate biosynthesis; chorismate from D-erythrose 4-phosphate and phosphoenolpyruvate: step 5/7. It participates in metabolic intermediate biosynthesis; chorismate biosynthesis; chorismate from D-erythrose 4-phosphate and phosphoenolpyruvate: step 6/7. Its function is as follows. The AROM polypeptide catalyzes 5 consecutive enzymatic reactions in prechorismate polyaromatic amino acid biosynthesis. The chain is Pentafunctional AROM polypeptide from Paracoccidioides brasiliensis (strain Pb18).